Here is a 152-residue protein sequence, read N- to C-terminus: Small ribosomal subunit protein uS13 (152 aa).

The protein belongs to the universal ribosomal protein uS13 family. As to quaternary structure, part of the 30S ribosomal subunit. Forms a loose heterodimer with protein S19. Forms two bridges to the 50S subunit in the 70S ribosome.

In terms of biological role, located at the top of the head of the 30S subunit, it contacts several helices of the 16S rRNA. In the 70S ribosome it contacts the 23S rRNA (bridge B1a) and protein L5 of the 50S subunit (bridge B1b), connecting the 2 subunits; these bridges are implicated in subunit movement. The protein is Small ribosomal subunit protein uS13 of Pyrobaculum aerophilum (strain ATCC 51768 / DSM 7523 / JCM 9630 / CIP 104966 / NBRC 100827 / IM2).